The sequence spans 344 residues: Lipase chaperone (344 aa).

A helical transmembrane segment spans residues 14–34 (AAIYGGVGLAAVAGVAMWSGA).

Belongs to the lipase chaperone family.

Its subcellular location is the cell inner membrane. May be involved in the folding of the extracellular lipase during its passage through the periplasm. The chain is Lipase chaperone from Burkholderia cenocepacia (strain ATCC BAA-245 / DSM 16553 / LMG 16656 / NCTC 13227 / J2315 / CF5610) (Burkholderia cepacia (strain J2315)).